An 85-amino-acid chain; its full sequence is Large ribosomal subunit protein bL27 (85 aa).

Positions 1–22 are disordered; sequence MAHKKAGGSTRNGRDSESKRLG.

This sequence belongs to the bacterial ribosomal protein bL27 family.

The polypeptide is Large ribosomal subunit protein bL27 (Aliivibrio salmonicida (strain LFI1238) (Vibrio salmonicida (strain LFI1238))).